The chain runs to 376 residues: Putative glutamate--cysteine ligase 2 (376 aa).

Belongs to the glutamate--cysteine ligase type 2 family. YbdK subfamily.

The catalysed reaction is L-cysteine + L-glutamate + ATP = gamma-L-glutamyl-L-cysteine + ADP + phosphate + H(+). Functionally, ATP-dependent carboxylate-amine ligase which exhibits weak glutamate--cysteine ligase activity. This chain is Putative glutamate--cysteine ligase 2, found in Paracoccus denitrificans (strain Pd 1222).